The sequence spans 74 residues: Large ribosomal subunit protein uL29 (74 aa).

Belongs to the universal ribosomal protein uL29 family.

The protein is Large ribosomal subunit protein uL29 of Streptomyces avermitilis (strain ATCC 31267 / DSM 46492 / JCM 5070 / NBRC 14893 / NCIMB 12804 / NRRL 8165 / MA-4680).